The chain runs to 800 residues: Protein SPT2 homolog (800 aa).

The important for interaction with DNA stretch occupies residues 1–687 (MDFHSVLRMA…PGHRPNMQPP (687 aa)). A coiled-coil region spans residues 53–82 (QEIQNKEVEAKRKKEGLLAKRKELKHDRKA). 3 disordered regions span residues 70 to 173 (LAKR…PALN), 197 to 646 (KEER…MAKP), and 661 to 698 (VPKS…TSSY). A compositionally biased stretch (acidic residues) spans 124 to 137 (TEEDEEYMTEEELY). The segment covering 155–164 (PQKVAKAAPG) has biased composition (low complexity). A coiled-coil region spans residues 196-224 (KKEERLRTAEELKELEFLERKAQKADRKD). 2 stretches are compositionally biased toward basic and acidic residues: residues 197-226 (KEER…KDPM) and 249-259 (HSVEKRSHENS). The segment covering 260–272 (KSSSTEQNGTFRK) has biased composition (polar residues). The segment covering 273-295 (SSSDNRSREEKSGSVFHTKDSKF) has biased composition (basic and acidic residues). Low complexity-rich tracts occupy residues 328-360 (SGST…SSGK), 367-377 (SSSARSSSGSG), 390-424 (GASG…SVGA), 443-501 (GVSG…SVSG), and 514-581 (GAPG…ASSS). Positions 608 to 626 (NSVRHNTTSISVSARSSLG) are enriched in polar residues. Positions 684 to 693 (MQPPGRPLPP) are enriched in pro residues. The interval 688–800 (GRPLPPITSS…LKSAKKMKSR (113 aa)) is important for interaction with histones. A coiled-coil region spans residues 756–800 (REQQKEEARSLRLGIQEDLEELRREEEELKQKAKQLKSAKKMKSR).

Belongs to the SPT2 family. In terms of assembly, interacts with histones. Interacts with a heterotetrameric complex formed by histone H3 and H4, especially when the histone tetramer is not bound to DNA.

Its subcellular location is the nucleus. It localises to the nucleolus. In terms of biological role, histone chaperone that stabilizes pre-existing histone tetramers and regulates replication-independent histone exchange on chromatin. Required for normal chromatin refolding in the coding region of transcribed genes, and for the suppression of spurious transcription. Binds DNA and histones and promotes nucleosome assembly (in vitro). Facilitates formation of tetrameric histone complexes containing histone H3 and H4. Modulates RNA polymerase 1-mediated transcription. Binds DNA, with a preference for branched DNA species, such as Y-form DNA and Holliday junction DNA. In Xenopus laevis (African clawed frog), this protein is Protein SPT2 homolog (spty2d1).